We begin with the raw amino-acid sequence, 907 residues long: Protein translocase subunit SecA (907 aa).

ATP contacts are provided by residues Gln-87, 105-109 (GEGKT), and Asp-512. Residues 862–885 (AENQLDDGHSSDQNHSPMVRDERK) are disordered. Basic and acidic residues predominate over residues 867-885 (DDGHSSDQNHSPMVRDERK). The Zn(2+) site is built by Cys-892, Cys-894, Cys-903, and His-904.

The protein belongs to the SecA family. Monomer and homodimer. Part of the essential Sec protein translocation apparatus which comprises SecA, SecYEG and auxiliary proteins SecDF-YajC and YidC. Zn(2+) is required as a cofactor.

The protein localises to the cell inner membrane. The protein resides in the cytoplasm. It catalyses the reaction ATP + H2O + cellular proteinSide 1 = ADP + phosphate + cellular proteinSide 2.. Functionally, part of the Sec protein translocase complex. Interacts with the SecYEG preprotein conducting channel. Has a central role in coupling the hydrolysis of ATP to the transfer of proteins into and across the cell membrane, serving both as a receptor for the preprotein-SecB complex and as an ATP-driven molecular motor driving the stepwise translocation of polypeptide chains across the membrane. The protein is Protein translocase subunit SecA of Aliivibrio salmonicida (strain LFI1238) (Vibrio salmonicida (strain LFI1238)).